The sequence spans 229 residues: Uracil-DNA glycosylase (229 aa).

Residue Asp-64 is the Proton acceptor of the active site.

The protein belongs to the uracil-DNA glycosylase (UDG) superfamily. UNG family.

The protein localises to the cytoplasm. It catalyses the reaction Hydrolyzes single-stranded DNA or mismatched double-stranded DNA and polynucleotides, releasing free uracil.. Its function is as follows. Excises uracil residues from the DNA which can arise as a result of misincorporation of dUMP residues by DNA polymerase or due to deamination of cytosine. This is Uracil-DNA glycosylase from Escherichia coli O7:K1 (strain IAI39 / ExPEC).